Here is a 133-residue protein sequence, read N- to C-terminus: ATP synthase epsilon chain, chloroplastic (133 aa).

It belongs to the ATPase epsilon chain family. In terms of assembly, F-type ATPases have 2 components, CF(1) - the catalytic core - and CF(0) - the membrane proton channel. CF(1) has five subunits: alpha(3), beta(3), gamma(1), delta(1), epsilon(1). CF(0) has three main subunits: a, b and c.

Its subcellular location is the plastid. The protein localises to the chloroplast thylakoid membrane. In terms of biological role, produces ATP from ADP in the presence of a proton gradient across the membrane. This Atropa belladonna (Belladonna) protein is ATP synthase epsilon chain, chloroplastic.